Here is a 346-residue protein sequence, read N- to C-terminus: C5a anaphylatoxin chemotactic receptor 1 (346 aa).

Topologically, residues 1–33 are extracellular; that stretch reads MDDNNSDWTSYDFGNDTIPSPNEISLSHIGTRH. N-linked (GlcNAc...) asparagine glycans are attached at residues Asn-4 and Asn-15. A helical membrane pass occupies residues 34 to 60; that stretch reads WITLVCYGIVFLLGVPGNALVVWVTGF. Topologically, residues 61 to 65 are cytoplasmic; it reads RMPNS. A helical transmembrane segment spans residues 66-89; that stretch reads VNAQWFLNLAIADLLCCLSLPILM. At 90-106 the chain is on the extracellular side; it reads VPLAQDQHWPFGALACK. A disulfide bond links Cys-105 and Cys-183. A helical transmembrane segment spans residues 107-128; sequence LFSGIFYMMMYCSVLLLVVISL. Residues 129-149 are Cytoplasmic-facing; sequence DRFLLVTKPVWCQNNRQPRQA. A helical transmembrane segment spans residues 150 to 170; the sequence is RILCFIIWILGLLGSSPYFAH. The Extracellular portion of the chain corresponds to 171 to 194; it reads MEIQHHSETKTVCTGSYSSLGHAW. The helical transmembrane segment at 195–220 threads the bilayer; the sequence is AITIIRSFLFFLLPFLIICISHWKVY. Residues 221–238 lie on the Cytoplasmic side of the membrane; the sequence is HMTSSGRRQRDKSSRTLR. A helical transmembrane segment spans residues 239 to 261; it reads VILALVLGFFLCWTPLHIVDLLI. Topologically, residues 262-279 are extracellular; sequence LVSDQPSERFEVNLNLAH. Residues 280 to 300 traverse the membrane as a helical segment; sequence VLTLCLAYINSCLNPLLYVCL. Residues 301–346 lie on the Cytoplasmic side of the membrane; the sequence is GRGFKENLISSLRSVLHFASEAPTHGPSMTTNSKSTTDGVFREKPV. The tract at residues 323–346 is disordered; sequence PTHGPSMTTNSKSTTDGVFREKPV. The segment covering 327-338 has biased composition (polar residues); sequence PSMTTNSKSTTD.

This sequence belongs to the G-protein coupled receptor 1 family.

Its subcellular location is the cell membrane. Receptor for the chemotactic and inflammatory peptide anaphylatoxin C5a. This receptor stimulates chemotaxis, granule enzyme release and superoxide anion production. The polypeptide is C5a anaphylatoxin chemotactic receptor 1 (c5ar1) (Danio rerio (Zebrafish)).